We begin with the raw amino-acid sequence, 583 residues long: Ankyrin repeat and SOCS box protein 15 (583 aa).

ANK repeat units lie at residues 75 to 104, 110 to 139, 143 to 172, 176 to 205, 209 to 238, 242 to 271, 275 to 304, 307 to 336, 349 to 378, 379 to 408, and 416 to 444; these read KGWF…KTLW, DGET…WPNT, KGET…SLDQ, KRWS…NVHL, FGVT…DVFA, DGAS…SGNV, AGHL…KHAI, SGLT…DVNA, ERKT…DPNL, DPLN…NVNC, and TRFP…QVEL. Residues 524–579 form the SOCS box domain; that stretch reads WPEIRQIIENPCSLKHLCRLKIRRVMGLQRLCQPASIQMLPLPAAMRRYLLFKEFD.

It belongs to the ankyrin SOCS box (ASB) family.

Its pathway is protein modification; protein ubiquitination. Its function is as follows. May be a substrate-recognition component of a SCF-like ECS (Elongin-Cullin-SOCS-box protein) E3 ubiquitin-protein ligase complex which mediates the ubiquitination and subsequent proteasomal degradation of target proteins. The polypeptide is Ankyrin repeat and SOCS box protein 15 (Asb15) (Mus musculus (Mouse)).